A 622-amino-acid chain; its full sequence is Phosphomethylpyrimidine synthase (622 aa).

Substrate is bound by residues asparagine 226, methionine 255, tyrosine 284, histidine 320, 340-342 (SRG), 381-384 (DGLR), and glutamate 420. Histidine 424 lines the Zn(2+) pocket. Tyrosine 447 is a binding site for substrate. Position 488 (histidine 488) interacts with Zn(2+). Residues cysteine 568, cysteine 571, and cysteine 576 each coordinate [4Fe-4S] cluster.

Belongs to the ThiC family. In terms of assembly, homodimer. [4Fe-4S] cluster is required as a cofactor.

It catalyses the reaction 5-amino-1-(5-phospho-beta-D-ribosyl)imidazole + S-adenosyl-L-methionine = 4-amino-2-methyl-5-(phosphooxymethyl)pyrimidine + CO + 5'-deoxyadenosine + formate + L-methionine + 3 H(+). Its pathway is cofactor biosynthesis; thiamine diphosphate biosynthesis. Catalyzes the synthesis of the hydroxymethylpyrimidine phosphate (HMP-P) moiety of thiamine from aminoimidazole ribotide (AIR) in a radical S-adenosyl-L-methionine (SAM)-dependent reaction. This chain is Phosphomethylpyrimidine synthase, found in Ruthia magnifica subsp. Calyptogena magnifica.